The following is a 354-amino-acid chain: Peptide chain release factor 1 (354 aa).

Gln-230 carries the N5-methylglutamine modification. Residues 282–301 (KQASDAIKKQMIGSGDRSER) are disordered.

This sequence belongs to the prokaryotic/mitochondrial release factor family. Post-translationally, methylated by PrmC. Methylation increases the termination efficiency of RF1.

It localises to the cytoplasm. In terms of biological role, peptide chain release factor 1 directs the termination of translation in response to the peptide chain termination codons UAG and UAA. The chain is Peptide chain release factor 1 from Leptospira borgpetersenii serovar Hardjo-bovis (strain L550).